The following is a 78-amino-acid chain: Large ribosomal subunit protein bL31 (78 aa).

4 residues coordinate Zn(2+): C16, C18, C38, and C41.

It belongs to the bacterial ribosomal protein bL31 family. Type A subfamily. Part of the 50S ribosomal subunit. Zn(2+) is required as a cofactor.

Binds the 23S rRNA. The chain is Large ribosomal subunit protein bL31 from Frankia alni (strain DSM 45986 / CECT 9034 / ACN14a).